A 651-amino-acid polypeptide reads, in one-letter code: Protein numb homolog (651 aa).

The 161-residue stretch at 33–193 (RTGKCSFPVK…ASRTTFTREG (161 aa)) folds into the PID domain. Thr-102 carries the phosphothreonine; by AAK1 modification. A Phosphoserine modification is found at Ser-194. The segment at 228–255 (SSVAPGNTAPSPSSPTSPTSDATTSLEM) is disordered. A compositionally biased stretch (low complexity) spans 235-252 (TAPSPSSPTSPTSDATTS). Thr-243 bears the Phosphothreonine mark. Ser-244 carries the phosphoserine modification. 2 positions are modified to phosphoserine; by CaMK1: Ser-276 and Ser-295. 2 disordered regions span residues 419–483 (QSSG…SPFQ) and 623–651 (LENK…EIEL). Ser-425 carries the phosphoserine modification. Thr-436 is subject to Phosphothreonine. A compositionally biased stretch (basic and acidic residues) spans 436 to 449 (TPSEADRWLEEVSK). Phosphoserine is present on Ser-438. Residues 453 to 466 (AQQPQASAAPLQPV) are compositionally biased toward low complexity. Residues 630–644 (RTNPSPTNPFSSDLQ) are compositionally biased toward polar residues. Ser-634 is modified (phosphoserine).

Interacts with SIAH1. Interacts with LNX. Interacts with CDH1. Interacts with TFAP2A and TFAP2B. Interacts with RALBP1 in a complex also containing EPN1 and TFAP2A during interphase and mitosis. Interacts with AAK1. May interact with DUOXA1. Phosphorylated on Ser-276 and Ser-295 by CaMK1. In terms of processing, isoform 1 and isoform 2 are ubiquitinated by LNX leading to their subsequent proteasomal degradation. Ubiquitinated; mediated by SIAH1 and leading to its subsequent proteasomal degradation.

It localises to the cell membrane. Its subcellular location is the endosome membrane. In terms of biological role, regulates clathrin-mediated receptor endocytosis. Plays a role in the process of neurogenesis. Required throughout embryonic neurogenesis to maintain neural progenitor cells, also called radial glial cells (RGCs), by allowing their daughter cells to choose progenitor over neuronal cell fate. Not required for the proliferation of neural progenitor cells before the onset of neurogenesis. Also involved postnatally in the subventricular zone (SVZ) neurogenesis by regulating SVZ neuroblasts survival and ependymal wall integrity. May also mediate local repair of brain ventricular wall damage. This chain is Protein numb homolog, found in Homo sapiens (Human).